The primary structure comprises 833 residues: Leucine--tRNA ligase (833 aa).

The 'HIGH' region signature appears at 41-52 (PYPSGVGLHVGH). The 'KMSKS' region signature appears at 610–614 (KMSKS). Residue K613 coordinates ATP.

This sequence belongs to the class-I aminoacyl-tRNA synthetase family.

It is found in the cytoplasm. The enzyme catalyses tRNA(Leu) + L-leucine + ATP = L-leucyl-tRNA(Leu) + AMP + diphosphate. This chain is Leucine--tRNA ligase, found in Streptococcus pneumoniae serotype 2 (strain D39 / NCTC 7466).